Here is a 335-residue protein sequence, read N- to C-terminus: Meiotic expression up-regulated protein 14 (335 aa).

It is found in the cytoplasm. The protein localises to the cytoskeleton. Its subcellular location is the microtubule organizing center. It localises to the spindle pole body. The protein resides in the nucleus membrane. It is found in the prospore membrane. Its function is as follows. Has a role in nuclear division during meiosis II where it stabilizes the proper segregation of the spindle pole bodies. Also has a role in the formation and extension of the forespore membrane. The polypeptide is Meiotic expression up-regulated protein 14 (meu14) (Schizosaccharomyces pombe (strain 972 / ATCC 24843) (Fission yeast)).